The primary structure comprises 1475 residues: Protein Shroom4 (1475 aa).

A PDZ domain is found at 10-92 (YVPVQLQGGA…ILKLIVRRRN (83 aa)). Disordered stretches follow at residues 151 to 175 (EKSS…GHLL) and 202 to 321 (CALS…PPRS). Positions 249-258 (TSTSHASSYS) are enriched in polar residues. The segment covering 294 to 312 (EQHRASEPVDSLPQKEKPG) has biased composition (basic and acidic residues). Phosphoserine is present on Ser412. 4 disordered regions span residues 432–523 (SKGM…PSAT), 542–577 (HTEA…NRRR), 610–644 (NEAV…SPGD), and 658–688 (SECL…GQSS). Basic and acidic residues predominate over residues 471 to 485 (QTRKERKTTPLDDKL). Over residues 513–523 (SDLTSQQPSAT) the composition is skewed to polar residues. Over residues 542-557 (HTEASEEGDNEPKECG) the composition is skewed to basic and acidic residues. Over residues 558-568 (RLGGRRSGGPR) the composition is skewed to gly residues. 2 stretches are compositionally biased toward low complexity: residues 624–635 (PLSASNASLLPS) and 658–667 (SECLSQASES). The residue at position 722 (Ser722) is a Phosphoserine. 2 stretches are compositionally biased toward polar residues: residues 727–738 (AQPQVALSTEAP) and 775–791 (KSLS…HNNK). Disordered stretches follow at residues 727-753 (AQPQ…STPQ) and 772-791 (ESSK…HNNK). The residue at position 1010 (Ser1010) is a Phosphoserine. Disordered stretches follow at residues 1022–1041 (SNKP…ASMP) and 1055–1185 (SLEP…QSLQ). A compositionally biased stretch (pro residues) spans 1090 to 1099 (FPPPRPPPPN). Low complexity predominate over residues 1110–1125 (QLQQQQQQQQQQQQQQ). Acidic residues predominate over residues 1128–1145 (EEEEEKEQEEEGEKEEDL). The span at 1149-1168 (YFSSELTGSCAPNTEEQPQS) shows a compositional bias: polar residues. The 280-residue stretch at 1190-1469 (FALHPSNFVP…QLKCLKESLH (280 aa)) folds into the ASD2 domain. The stretch at 1380-1470 (SESNQEKLVL…LKCLKESLHL (91 aa)) forms a coiled coil.

Belongs to the shroom family. In terms of assembly, interacts directly with F-actin. As to expression, detected in most adult tissues examined. Expressed in brain, lung, heart, liver, kidney, muscle and ovary. Expressed throughout the brain, with high expression in the brain stem and cerebellum and weaker expression in the hypothalamus, the hippocampus and the olfactory bulb. Expressed in wide range of cell types during development, including vascular endothelium and the polarized epithelium of the neural tube and kidney.

The protein localises to the cytoplasm. It is found in the cytoskeleton. Its function is as follows. Probable regulator of cytoskeletal architecture that plays an important role in development. May regulate cellular and cytoskeletal architecture by modulating the spatial distribution of myosin II. This Mus musculus (Mouse) protein is Protein Shroom4 (Shroom4).